A 408-amino-acid polypeptide reads, in one-letter code: LL-diaminopimelate aminotransferase (408 aa).

Substrate-binding residues include tyrosine 15 and glycine 42. Pyridoxal 5'-phosphate contacts are provided by residues tyrosine 72, 108-109, tyrosine 132, asparagine 187, tyrosine 218, and 246-248; these read SK and SFS. 3 residues coordinate substrate: lysine 109, tyrosine 132, and asparagine 187. Lysine 249 carries the post-translational modification N6-(pyridoxal phosphate)lysine. The pyridoxal 5'-phosphate site is built by arginine 257 and asparagine 292. Residues asparagine 292 and arginine 388 each coordinate substrate.

This sequence belongs to the class-I pyridoxal-phosphate-dependent aminotransferase family. LL-diaminopimelate aminotransferase subfamily. Homodimer. It depends on pyridoxal 5'-phosphate as a cofactor.

The enzyme catalyses (2S,6S)-2,6-diaminopimelate + 2-oxoglutarate = (S)-2,3,4,5-tetrahydrodipicolinate + L-glutamate + H2O + H(+). It functions in the pathway amino-acid biosynthesis; L-lysine biosynthesis via DAP pathway; LL-2,6-diaminopimelate from (S)-tetrahydrodipicolinate (aminotransferase route): step 1/1. Its function is as follows. Involved in the synthesis of meso-diaminopimelate (m-DAP or DL-DAP), required for both lysine and peptidoglycan biosynthesis. Catalyzes the direct conversion of tetrahydrodipicolinate to LL-diaminopimelate. Is also able to catalyze the reverse reaction in vitro, i.e. the transamination of LL-diaminopimelate with 2-oxoglutarate to produce tetrahydrodipicolinate and glutamate. Cannot use m-DAP, lysine or ornithine as the amino-group donor, when using 2-oxoglutarate as the amino-group acceptor. Cannot use pyruvate, indole 3-pyruvate, oxaloacetate or phenyl pyruvate as the amino-group acceptor, when using LL-DAP as the amino-group donor. The sequence is that of LL-diaminopimelate aminotransferase from Leptospira interrogans serogroup Icterohaemorrhagiae serovar copenhageni (strain Fiocruz L1-130).